The following is a 181-amino-acid chain: Ribulose bisphosphate carboxylase small subunit, chloroplastic 1 (181 aa).

The N-terminal 54 residues, 1-54 (MASSMLSSAAVVTSPAQATMVAPFTGLKSSSAFPVTRKANNDITSIVSNGGRVS), are a transit peptide targeting the chloroplast.

This sequence belongs to the RuBisCO small chain family. In terms of assembly, heterohexadecamer of 8 large and 8 small subunits.

Its subcellular location is the plastid. It is found in the chloroplast. RuBisCO catalyzes two reactions: the carboxylation of D-ribulose 1,5-bisphosphate, the primary event in carbon dioxide fixation, as well as the oxidative fragmentation of the pentose substrate. Both reactions occur simultaneously and in competition at the same active site. Although the small subunit is not catalytic it is essential for maximal activity. This Brassica napus (Rape) protein is Ribulose bisphosphate carboxylase small subunit, chloroplastic 1.